Here is a 271-residue protein sequence, read N- to C-terminus: Vacuolar arginine/histidine antiporter stm1 (271 aa).

A PQ-loop 1 domain is found at 14 to 80 (LTELSSFLGA…GNVSSTVLVL (67 aa)). 3 helical membrane-spanning segments follow: residues 17–37 (LSSF…IPQL), 49–69 (ISDL…LGSI), and 77–97 (VLVL…QIYY). Position 119 is a phosphoserine (Ser119). Helical transmembrane passes span 144 to 164 (FGVM…IISS), 178 to 198 (PFTA…PQII), 211 to 231 (IIFF…ILVF), and 245 to 265 (PWIL…YQFI). The PQ-loop 2 domain maps to 185-239 (SSVLYFCARIPQIIKNHKAKSTEGLSIIFFVLASVGNTSYAFSILVFPASDYLNY).

Belongs to the laat-1 family.

The protein resides in the vacuole membrane. It carries out the reaction L-histidine(out) + L-arginine(in) = L-histidine(in) + L-arginine(out). Amino acid transporter that moves basic amino acids across the vacuolar membrane. Appears to function as an arginine/histidine antiporter. This Schizosaccharomyces pombe (strain 972 / ATCC 24843) (Fission yeast) protein is Vacuolar arginine/histidine antiporter stm1 (stm1).